Reading from the N-terminus, the 241-residue chain is Serine protease 58 (241 aa).

The first 17 residues, 1 to 17 (MKFILLWALLNLTVALA), serve as a signal peptide directing secretion. The region spanning 18–239 (FNPDYTVSST…YIPWIENVIQ (222 aa)) is the Peptidase S1 domain. Cysteines 41 and 57 form a disulfide. Active-site charge relay system residues include His56 and Asp101. 3 disulfide bridges follow: Cys133–Cys201, Cys165–Cys180, and Cys191–Cys215. Asn156 and Asn173 each carry an N-linked (GlcNAc...) asparagine glycan. Ser195 serves as the catalytic Charge relay system.

The protein belongs to the peptidase S1 family.

It localises to the secreted. The enzyme catalyses Preferential cleavage: Arg-|-Xaa, Lys-|-Xaa.. This is Serine protease 58 (PRSS58) from Homo sapiens (Human).